Here is a 449-residue protein sequence, read N- to C-terminus: Ribulose bisphosphate carboxylase large chain (449 aa).

Positions 1–2 are excised as a propeptide; sequence MS. Position 3 is an N-acetylproline (proline 3). At lysine 14 the chain carries N6,N6,N6-trimethyllysine. Residues asparagine 123 and threonine 173 each coordinate substrate. The active-site Proton acceptor is the lysine 175. Lysine 177 lines the substrate pocket. 3 residues coordinate Mg(2+): lysine 201, aspartate 203, and glutamate 204. Lysine 201 is subject to N6-carboxylysine. Histidine 294 acts as the Proton acceptor in catalysis. Arginine 295, histidine 327, and serine 379 together coordinate substrate.

It belongs to the RuBisCO large chain family. Type I subfamily. Heterohexadecamer of 8 large chains and 8 small chains; disulfide-linked. The disulfide link is formed within the large subunit homodimers. The cofactor is Mg(2+). In terms of processing, the disulfide bond which can form in the large chain dimeric partners within the hexadecamer appears to be associated with oxidative stress and protein turnover.

It is found in the plastid. The protein resides in the chloroplast. It carries out the reaction 2 (2R)-3-phosphoglycerate + 2 H(+) = D-ribulose 1,5-bisphosphate + CO2 + H2O. The enzyme catalyses D-ribulose 1,5-bisphosphate + O2 = 2-phosphoglycolate + (2R)-3-phosphoglycerate + 2 H(+). Its function is as follows. RuBisCO catalyzes two reactions: the carboxylation of D-ribulose 1,5-bisphosphate, the primary event in carbon dioxide fixation, as well as the oxidative fragmentation of the pentose substrate in the photorespiration process. Both reactions occur simultaneously and in competition at the same active site. This is Ribulose bisphosphate carboxylase large chain from Hippocratea richardiana.